Here is a 473-residue protein sequence, read N- to C-terminus: Adhesive plaque matrix protein 2 (473 aa).

A signal peptide spans 1-17 (MLFSFFLLLTCTQLCLG). Tyrosine 23, tyrosine 31, tyrosine 36, and tyrosine 43 each carry 3',4'-dihydroxyphenylalanine. EGF-like domains lie at 45 to 81 (PVNPCLKKPCKYNGVCKPRGGSYKCFCKGGYYGYNCN), 82 to 117 (LKNACKPNQCKNKSRCVPVGKTFKCVCRNGNFGRLC), 118 to 154 (EKNVCSPNPCKNNGKCSPLGKTGYKCTCSGGYTGPRC), 155 to 191 (EVHACKPNPCKNKGRCFPDGKTGYKCRCVDGYSGPTC), 192 to 228 (QENACKPNPCSNGGTCSADKFGDYSCECRPGYFGPEC), 229 to 265 (ERYVCAPNPCKNGGICSSDGSGGYRCRCKGGYSGPTC), 266 to 301 (KVNVCKPTPCKNSGRCVNKGSSYNCICKGGYSGPTC), 302 to 340 (GENVCKPNPCQNRGRCYPDNSDDGFKCRCVGGYKGPTCE), 342 to 378 (KPNPCNTKPCKNGGKCNYNGKIYTCKCAYGWRGRHCT), 383 to 420 (KPNPCVVSKPCKNRGKCIWNGKAYRCKCAYGYGGRHCT), and 425 to 461 (KKNPCASRPCKNRGKCTDKGNGYVCKCARGYSGRYCS). 33 cysteine pairs are disulfide-bonded: cysteine 49/cysteine 60, cysteine 54/cysteine 69, cysteine 71/cysteine 80, cysteine 86/cysteine 97, cysteine 91/cysteine 106, cysteine 108/cysteine 117, cysteine 122/cysteine 133, cysteine 127/cysteine 143, cysteine 145/cysteine 154, cysteine 159/cysteine 170, cysteine 164/cysteine 180, cysteine 182/cysteine 191, cysteine 196/cysteine 207, cysteine 201/cysteine 217, cysteine 219/cysteine 228, cysteine 233/cysteine 244, cysteine 238/cysteine 254, cysteine 256/cysteine 265, cysteine 270/cysteine 281, cysteine 275/cysteine 290, cysteine 292/cysteine 301, cysteine 306/cysteine 317, cysteine 311/cysteine 328, cysteine 330/cysteine 339, cysteine 346/cysteine 357, cysteine 351/cysteine 366, cysteine 368/cysteine 377, cysteine 387/cysteine 399, cysteine 393/cysteine 408, cysteine 410/cysteine 419, cysteine 429/cysteine 440, cysteine 434/cysteine 449, and cysteine 451/cysteine 460. Residue asparagine 93 is glycosylated (N-linked (GlcNAc...) asparagine).

Contains L-DOPA (3',4'-dihydroxyphenylalanine). As to expression, produced by the byssal gland.

The protein localises to the secreted. Provides adhesiveness to the mussel's foot. Mussels produce one of the strongest water insoluble glues. The mussel's adhesive is a bundle of threads, called a byssus, formed by a fibrous collagenous core coated with adhesive proteins. The polypeptide is Adhesive plaque matrix protein 2 (FP2) (Mytilus galloprovincialis (Mediterranean mussel)).